We begin with the raw amino-acid sequence, 157 residues long: DNA gyrase inhibitor (157 aa).

It belongs to the DNA gyrase inhibitor family. As to quaternary structure, interacts with DNA gyrase.

The protein localises to the cytoplasm. Inhibits the supercoiling activity of DNA gyrase. Acts by inhibiting DNA gyrase at an early step, prior to (or at the step of) binding of DNA by the gyrase. It protects cells against toxins that target DNA gyrase, by inhibiting activity of these toxins and reducing the formation of lethal double-strand breaks in the cell. This is DNA gyrase inhibitor from Cronobacter sakazakii (strain ATCC BAA-894) (Enterobacter sakazakii).